We begin with the raw amino-acid sequence, 280 residues long: DNA repair protein XRCC2 (280 aa).

Ser10 is modified (phosphoserine).

It belongs to the RecA family. RAD51 subfamily. As to quaternary structure, interacts with RAD51D. Part of the BCDX2 complex consisting of RAD51B, RAD51C, RAD51D and XRCC2; the complex has a ring-like structure arranged into a flat disk around a central channel. In the absence of DNA, the BCDX2 subcomplex XRCC2:RAD51D formed a multimeric ring structure; in the presence of single-stranded DNA it formed a filamentous structure with the ssDNA.

It localises to the nucleus. It is found in the cytoplasm. The protein resides in the cytoskeleton. Its subcellular location is the microtubule organizing center. The protein localises to the centrosome. Involved in the homologous recombination repair (HRR) pathway of double-stranded DNA, thought to repair chromosomal fragmentation, translocations and deletions. Part of the RAD51 paralog protein complex BCDX2 which acts in the BRCA1-BRCA2-dependent HR pathway. Upon DNA damage, BCDX2 acts downstream of BRCA2 recruitment and upstream of RAD51 recruitment. BCDX2 binds predominantly to the intersection of the four duplex arms of the Holliday junction and to junction of replication forks. The BCDX2 complex was originally reported to bind single-stranded DNA, single-stranded gaps in duplex DNA and specifically to nicks in duplex DNA. In Homo sapiens (Human), this protein is DNA repair protein XRCC2 (XRCC2).